A 217-amino-acid polypeptide reads, in one-letter code: Ubiquitin-conjugating enzyme E2 1 (217 aa).

The UBC core domain maps to 4–151 (NRSRRIAKEL…AREWTSSYAA (148 aa)). The Glycyl thioester intermediate role is filled by cysteine 89.

Belongs to the ubiquitin-conjugating enzyme family.

The protein localises to the cytoplasm. Its subcellular location is the nucleus. The catalysed reaction is S-ubiquitinyl-[E1 ubiquitin-activating enzyme]-L-cysteine + [E2 ubiquitin-conjugating enzyme]-L-cysteine = [E1 ubiquitin-activating enzyme]-L-cysteine + S-ubiquitinyl-[E2 ubiquitin-conjugating enzyme]-L-cysteine.. It participates in protein modification; protein ubiquitination. In terms of biological role, catalyzes the covalent attachment of ubiquitin to other proteins. Functions in degradation of misfolded or regulated proteins localized in the endoplasmic reticulum (ER) lumen or membrane via the ubiquitin-proteasome system. Cognate E2 conjugating enzyme for the HRD1 ubiquitin ligase complex, which is part of the ERAD-L and ERAD-M pathways responsible for the rapid degradation of soluble lumenal and membrane proteins with misfolded lumenal domains (ERAD-L), or ER-membrane proteins with misfolded transmembrane domains (ERAD-M). This chain is Ubiquitin-conjugating enzyme E2 1 (ubc1), found in Schizosaccharomyces pombe (strain 972 / ATCC 24843) (Fission yeast).